We begin with the raw amino-acid sequence, 398 residues long: Lysophospholipid transporter LplT (398 aa).

12 consecutive transmembrane segments (helical) span residues 19 to 39 (VIVA…ATLA), 53 to 73 (VLQM…GQIA), 96 to 116 (ICLG…AAAY), 139 to 159 (LMEA…GVLA), 164 to 184 (IAAL…NLFI), 195 to 213 (SWQL…VVLW), 227 to 247 (LFWG…PVAL), 257 to 277 (YLNA…AKLV), 281 to 301 (TVSR…MFSL), 304 to 324 (ALLP…FFVV), 352 to 372 (NSTM…GVPA), and 373 to 393 (VATG…LWIW).

This sequence belongs to the major facilitator superfamily. LplT (TC 2.A.1.42) family.

It is found in the cell inner membrane. In terms of biological role, catalyzes the facilitated diffusion of 2-acyl-glycero-3-phosphoethanolamine (2-acyl-GPE) into the cell. This is Lysophospholipid transporter LplT from Salmonella arizonae (strain ATCC BAA-731 / CDC346-86 / RSK2980).